The sequence spans 467 residues: Nodulation protein T (467 aa).

A signal peptide spans 1–17; the sequence is MRFTRYTTPFFSLLLSG. Cys18 carries the N-palmitoyl cysteine lipid modification. Cys18 carries the S-diacylglycerol cysteine lipid modification.

It belongs to the outer membrane factor (OMF) (TC 1.B.17) family.

Its subcellular location is the cell membrane. The polypeptide is Nodulation protein T (nodT) (Rhizobium leguminosarum bv. trifolii).